The chain runs to 211 residues: Ribosome maturation factor RimM (211 aa).

Positions 111 to 182 constitute a PRC barrel domain; sequence PDAWYDHQLV…TLVITPPLGL (72 aa). Positions 184 to 211 are disordered; that stretch reads EEIPDEQPTPSATSDAEPGSAPEGDDAR.

Belongs to the RimM family. In terms of assembly, binds ribosomal protein uS19.

The protein localises to the cytoplasm. Functionally, an accessory protein needed during the final step in the assembly of 30S ribosomal subunit, possibly for assembly of the head region. Essential for efficient processing of 16S rRNA. May be needed both before and after RbfA during the maturation of 16S rRNA. It has affinity for free ribosomal 30S subunits but not for 70S ribosomes. This chain is Ribosome maturation factor RimM, found in Clavibacter sepedonicus (Clavibacter michiganensis subsp. sepedonicus).